Reading from the N-terminus, the 115-residue chain is Chondroitin proteoglycan 8 (115 aa).

The first 16 residues, 1 to 16, serve as a signal peptide directing secretion; sequence MRPFILLALLVSVTVA. Residues 33–96 form a disordered region; that stretch reads VRRTTRDASD…GSGAAEVTSV (64 aa). O-linked (Xyl...) (chondroitin sulfate) serine glycosylation is found at Ser-61, Ser-63, Ser-84, Ser-88, and Ser-109.

This Caenorhabditis elegans protein is Chondroitin proteoglycan 8.